We begin with the raw amino-acid sequence, 649 residues long: Acetyl-coenzyme A synthetase (649 aa).

Residues 189-192 (RGGK), threonine 311, and asparagine 335 each bind CoA. ATP contacts are provided by residues 387-389 (GEP), 411-416 (DTWWQT), aspartate 500, and arginine 515. A CoA-binding site is contributed by serine 523. Position 526 (arginine 526) interacts with ATP. Valine 537, histidine 539, and valine 542 together coordinate Mg(2+). Arginine 584 is a CoA binding site. Lysine 609 carries the N6-acetyllysine modification.

This sequence belongs to the ATP-dependent AMP-binding enzyme family. It depends on Mg(2+) as a cofactor. Acetylated. Deacetylation by the SIR2-homolog deacetylase activates the enzyme.

It carries out the reaction acetate + ATP + CoA = acetyl-CoA + AMP + diphosphate. In terms of biological role, catalyzes the conversion of acetate into acetyl-CoA (AcCoA), an essential intermediate at the junction of anabolic and catabolic pathways. AcsA undergoes a two-step reaction. In the first half reaction, AcsA combines acetate with ATP to form acetyl-adenylate (AcAMP) intermediate. In the second half reaction, it can then transfer the acetyl group from AcAMP to the sulfhydryl group of CoA, forming the product AcCoA. The chain is Acetyl-coenzyme A synthetase from Rhizobium meliloti (strain 1021) (Ensifer meliloti).